We begin with the raw amino-acid sequence, 161 residues long: D-amino-acid N-acetyltransferase HPA3 (161 aa).

The residue at position 2 (Ser-2) is an N-acetylserine. The N-acetyltransferase domain maps to 14 to 161 (IVVKAIEPKD…DKVLYKRNGY (148 aa)). 98–111 (LYVTERARVKGVGR) contacts acetyl-CoA.

It belongs to the acetyltransferase family. GNAT subfamily. Autoacetylates in an intermolecular reaction.

Its subcellular location is the cytoplasm. It localises to the nucleus. The enzyme catalyses a D-alpha-amino acid + acetyl-CoA = an N-acetyl-D-amino acid + CoA + H(+). Functionally, N-acetyltransferase that acts on a wide range of D-amino acids. Catalyzes the N-acetylation through an ordered bi-bi mechanism, in which acetyl-CoA is the first substrate to be bound and CoA is the last product to be liberated. D-amino acids are toxic for the cell and their N-acetylation, preceding removal from cells, plays an important role in detoxification of D-amino acids. In vitro, capable of acetylating histone H4 at 'Lys-8' and polyamines like putrescine, spermidine and spermine. The protein is D-amino-acid N-acetyltransferase HPA3 of Saccharomyces cerevisiae (strain ATCC 204508 / S288c) (Baker's yeast).